The following is a 504-amino-acid chain: Maturase K (504 aa).

The protein belongs to the intron maturase 2 family. MatK subfamily.

The protein localises to the plastid. It localises to the chloroplast. Usually encoded in the trnK tRNA gene intron. Probably assists in splicing its own and other chloroplast group II introns. This Thlaspi arvense (Field penny-cress) protein is Maturase K.